We begin with the raw amino-acid sequence, 243 residues long: Triosephosphate isomerase (243 aa).

N9–K11 is a substrate binding site. H96 serves as the catalytic Electrophile. E165 serves as the catalytic Proton acceptor. Substrate-binding positions include G171, S204, and G225–G226.

Belongs to the triosephosphate isomerase family. As to quaternary structure, homodimer.

The protein resides in the cytoplasm. It catalyses the reaction D-glyceraldehyde 3-phosphate = dihydroxyacetone phosphate. It functions in the pathway carbohydrate biosynthesis; gluconeogenesis. It participates in carbohydrate degradation; glycolysis; D-glyceraldehyde 3-phosphate from glycerone phosphate: step 1/1. Involved in the gluconeogenesis. Catalyzes stereospecifically the conversion of dihydroxyacetone phosphate (DHAP) to D-glyceraldehyde-3-phosphate (G3P). This chain is Triosephosphate isomerase, found in Synechococcus sp. (strain CC9311).